Consider the following 736-residue polypeptide: Phosphoribosylformylglycinamidine synthase subunit PurL (736 aa).

His48 is a catalytic residue. ATP-binding residues include Tyr51 and Lys90. Glu92 contributes to the Mg(2+) binding site. Substrate is bound by residues 93-96 (SHNH) and Arg115. Residue His94 is the Proton acceptor of the active site. Mg(2+) is bound at residue Asp116. Gln239 contributes to the substrate binding site. Residue Asp267 participates in Mg(2+) binding. 311–313 (ESQ) serves as a coordination point for substrate. Positions 492 and 529 each coordinate ATP. A Mg(2+)-binding site is contributed by Asn530. A substrate-binding site is contributed by Ser532.

It belongs to the FGAMS family. As to quaternary structure, monomer. Part of the FGAM synthase complex composed of 1 PurL, 1 PurQ and 2 PurS subunits.

It is found in the cytoplasm. It carries out the reaction N(2)-formyl-N(1)-(5-phospho-beta-D-ribosyl)glycinamide + L-glutamine + ATP + H2O = 2-formamido-N(1)-(5-O-phospho-beta-D-ribosyl)acetamidine + L-glutamate + ADP + phosphate + H(+). It participates in purine metabolism; IMP biosynthesis via de novo pathway; 5-amino-1-(5-phospho-D-ribosyl)imidazole from N(2)-formyl-N(1)-(5-phospho-D-ribosyl)glycinamide: step 1/2. In terms of biological role, part of the phosphoribosylformylglycinamidine synthase complex involved in the purines biosynthetic pathway. Catalyzes the ATP-dependent conversion of formylglycinamide ribonucleotide (FGAR) and glutamine to yield formylglycinamidine ribonucleotide (FGAM) and glutamate. The FGAM synthase complex is composed of three subunits. PurQ produces an ammonia molecule by converting glutamine to glutamate. PurL transfers the ammonia molecule to FGAR to form FGAM in an ATP-dependent manner. PurS interacts with PurQ and PurL and is thought to assist in the transfer of the ammonia molecule from PurQ to PurL. This is Phosphoribosylformylglycinamidine synthase subunit PurL from Beijerinckia indica subsp. indica (strain ATCC 9039 / DSM 1715 / NCIMB 8712).